The sequence spans 581 residues: Arginine--tRNA ligase (581 aa).

Residues P126–H136 carry the 'HIGH' region motif.

This sequence belongs to the class-I aminoacyl-tRNA synthetase family. Monomer.

Its subcellular location is the cytoplasm. It catalyses the reaction tRNA(Arg) + L-arginine + ATP = L-arginyl-tRNA(Arg) + AMP + diphosphate. The sequence is that of Arginine--tRNA ligase from Shewanella baltica (strain OS155 / ATCC BAA-1091).